The chain runs to 305 residues: Methionyl-tRNA formyltransferase (305 aa).

Ser-109–Pro-112 provides a ligand contact to (6S)-5,6,7,8-tetrahydrofolate.

It belongs to the Fmt family.

The enzyme catalyses L-methionyl-tRNA(fMet) + (6R)-10-formyltetrahydrofolate = N-formyl-L-methionyl-tRNA(fMet) + (6S)-5,6,7,8-tetrahydrofolate + H(+). In terms of biological role, attaches a formyl group to the free amino group of methionyl-tRNA(fMet). The formyl group appears to play a dual role in the initiator identity of N-formylmethionyl-tRNA by promoting its recognition by IF2 and preventing the misappropriation of this tRNA by the elongation apparatus. In Paramagnetospirillum magneticum (strain ATCC 700264 / AMB-1) (Magnetospirillum magneticum), this protein is Methionyl-tRNA formyltransferase.